Consider the following 258-residue polypeptide: Tetratricopeptide repeat protein 33 (258 aa).

TPR repeat units follow at residues 59–92, 93–126, and 127–160; these read SKRLKEEGGLLAEDGRQKEALTKWDEAIQLTPGD, AALYEMKAQVLMGVHEIFPAVQAAETAVQRNPHF, and VEAWQTLGRAQLSLGEITMAIRSFQIGLHICPAN. Residues 231–258 are disordered; sequence SASGSENLSDRKEDKVETNDSKEFIKAR. Basic and acidic residues predominate over residues 238-258; the sequence is LSDRKEDKVETNDSKEFIKAR.

In Xenopus laevis (African clawed frog), this protein is Tetratricopeptide repeat protein 33 (ttc33).